The following is a 215-amino-acid chain: MNKVYDWFEERLEIQAIADDITSKYVPPHVNIFYCLGGITLTCFLIQFATGFAMTFYYKPTVAEAFASVQYIMNEVNFGWLIRSIHKWSASMMVLMMILHVFRVYLTGGFKKPRELTWVTGVVLAVITVSFGVTGYSLPWDQVGYWAVKIVSGIPAAIPVVGDQLVELMRGGESVGQATLTRFYSLHTFVLPWSIAVFMLMHFLMIRKQGISGPL.

A helical transmembrane segment spans residues Ile-32 to Phe-52. Cys-35 contacts heme c. The heme b site is built by His-86 and His-100. Helical transmembrane passes span Ala-90–Phe-110, Leu-116–Tyr-136, and Leu-186–Ile-206. Residues His-187 and His-202 each coordinate heme b.

It belongs to the cytochrome b family. PetB subfamily. The 4 large subunits of the cytochrome b6-f complex are cytochrome b6, subunit IV (17 kDa polypeptide, PetD), cytochrome f and the Rieske protein, while the 4 small subunits are PetG, PetL, PetM and PetN. The complex functions as a dimer. It depends on heme b as a cofactor. Heme c is required as a cofactor.

It localises to the cellular thylakoid membrane. Its function is as follows. Component of the cytochrome b6-f complex, which mediates electron transfer between photosystem II (PSII) and photosystem I (PSI), cyclic electron flow around PSI, and state transitions. This chain is Cytochrome b6, found in Synechococcus elongatus.